Consider the following 131-residue polypeptide: Small ribosomal subunit protein uS12 (131 aa).

At Asp89 the chain carries 3-methylthioaspartic acid.

The protein belongs to the universal ribosomal protein uS12 family. As to quaternary structure, part of the 30S ribosomal subunit. Contacts proteins S8 and S17. May interact with IF1 in the 30S initiation complex.

In terms of biological role, with S4 and S5 plays an important role in translational accuracy. Its function is as follows. Interacts with and stabilizes bases of the 16S rRNA that are involved in tRNA selection in the A site and with the mRNA backbone. Located at the interface of the 30S and 50S subunits, it traverses the body of the 30S subunit contacting proteins on the other side and probably holding the rRNA structure together. The combined cluster of proteins S8, S12 and S17 appears to hold together the shoulder and platform of the 30S subunit. In Karelsulcia muelleri (strain GWSS) (Sulcia muelleri), this protein is Small ribosomal subunit protein uS12.